The following is a 449-amino-acid chain: Maturation protein A (449 aa).

Belongs to the Leviviricetes maturation protein family. As to quaternary structure, interacts with the host pilus.

It localises to the virion. Functionally, the maturation protein is required for the typical attachment of the phage to the side of the bacterial F-pili. Binds to sequences located toward each end of the genome, hence circularizing it. The RNA genome-maturation protein A complex is released from the capsid upon host receptor binding. Maturation protein A enters the cell along with the viral RNA. In Pseudomonas aeruginosa (Bacteriophage PP7), this protein is Maturation protein A.